Consider the following 178-residue polypeptide: Alkyl hydroperoxide reductase AhpD (178 aa).

Catalysis depends on cysteine 131, which acts as the Proton donor. Cysteine 131 and cysteine 134 are oxidised to a cystine. Cysteine 134 (cysteine sulfenic acid (-SOH) intermediate) is an active-site residue.

It belongs to the AhpD family.

The catalysed reaction is N(6)-[(R)-dihydrolipoyl]-L-lysyl-[lipoyl-carrier protein] + a hydroperoxide = N(6)-[(R)-lipoyl]-L-lysyl-[lipoyl-carrier protein] + an alcohol + H2O. Antioxidant protein with alkyl hydroperoxidase activity. Required for the reduction of the AhpC active site cysteine residues and for the regeneration of the AhpC enzyme activity. The protein is Alkyl hydroperoxide reductase AhpD of Methylocella silvestris (strain DSM 15510 / CIP 108128 / LMG 27833 / NCIMB 13906 / BL2).